Consider the following 439-residue polypeptide: Ribosomal protein uS12 methylthiotransferase RimO (439 aa).

The 113-residue stretch at 7 to 119 (KQLCLISLGC…IDIMIAKKQN (113 aa)) folds into the MTTase N-terminal domain. Residues Cys-16, Cys-50, Cys-82, Cys-151, Cys-155, and Cys-158 each contribute to the [4Fe-4S] cluster site. The Radical SAM core domain occupies 137-368 (TGSSVHAYVK…ALKHQNHSFK (232 aa)).

Belongs to the methylthiotransferase family. RimO subfamily. Requires [4Fe-4S] cluster as cofactor.

It is found in the cytoplasm. It catalyses the reaction L-aspartate(89)-[ribosomal protein uS12]-hydrogen + (sulfur carrier)-SH + AH2 + 2 S-adenosyl-L-methionine = 3-methylsulfanyl-L-aspartate(89)-[ribosomal protein uS12]-hydrogen + (sulfur carrier)-H + 5'-deoxyadenosine + L-methionine + A + S-adenosyl-L-homocysteine + 2 H(+). In terms of biological role, catalyzes the methylthiolation of an aspartic acid residue of ribosomal protein uS12. This Helicobacter pylori (strain P12) protein is Ribosomal protein uS12 methylthiotransferase RimO.